A 673-amino-acid polypeptide reads, in one-letter code: Estrogen receptor beta (673 aa).

The interval M1 to F181 is modulating. NR C4-type zinc fingers lie at residues C182–C202 and C218–C242. Residues C182–M247 constitute a DNA-binding region (nuclear receptor). In terms of domain architecture, NR LBD spans S316–N552. The segment at T553 to T602 is disordered. Over residues S554–S566 the composition is skewed to low complexity.

This sequence belongs to the nuclear hormone receptor family. NR3 subfamily. Binds DNA as a homodimer. Can form a heterodimer with ER-alpha. As to expression, abundant in the liver and testes, less abundant in the ovary and barely detectable in the muscle.

It is found in the nucleus. Binds estrogens with an affinity similar to that of ER-alpha, and activates expression of reporter genes containing estrogen response elements (ERE) in an estrogen-dependent manner. This chain is Estrogen receptor beta (esr2), found in Micropogonias undulatus (Atlantic croaker).